We begin with the raw amino-acid sequence, 230 residues long: Exosome complex component Rrp4 (230 aa).

Residues 60-129 (NDKVIGKVID…EIKESWLSLK (70 aa)) form the S1 motif domain. Residues 137–195 (EEGSIIYIKAPKVPRVIGKAGNMINMIKSETNTKIIVGQNGLIWIDGEPENVDLAINAI) enclose the KH domain.

It belongs to the RRP4 family. Component of the archaeal exosome complex. Forms a trimer of Rrp4 and/or Csl4 subunits. The trimer associates with a hexameric ring-like arrangement composed of 3 Rrp41-Rrp42 heterodimers.

The protein resides in the cytoplasm. Non-catalytic component of the exosome, which is a complex involved in RNA degradation. Increases the RNA binding and the efficiency of RNA degradation. Confers strong poly(A) specificity to the exosome. This chain is Exosome complex component Rrp4, found in Picrophilus torridus (strain ATCC 700027 / DSM 9790 / JCM 10055 / NBRC 100828 / KAW 2/3).